A 433-amino-acid chain; its full sequence is Glutamate-1-semialdehyde 2,1-aminomutase (433 aa).

An N6-(pyridoxal phosphate)lysine modification is found at Lys271.

The protein belongs to the class-III pyridoxal-phosphate-dependent aminotransferase family. HemL subfamily. Homodimer. Pyridoxal 5'-phosphate is required as a cofactor.

It localises to the cytoplasm. The catalysed reaction is (S)-4-amino-5-oxopentanoate = 5-aminolevulinate. It functions in the pathway porphyrin-containing compound metabolism; protoporphyrin-IX biosynthesis; 5-aminolevulinate from L-glutamyl-tRNA(Glu): step 2/2. Its pathway is porphyrin-containing compound metabolism; chlorophyll biosynthesis. The sequence is that of Glutamate-1-semialdehyde 2,1-aminomutase from Prochlorococcus marinus (strain MIT 9215).